The following is a 1406-amino-acid chain: EF-hand calcium-binding domain-containing protein 5 (1406 aa).

The tract at residues 255–655 is disordered; the sequence is NKDLPQQQRD…KACEPKPQHV (401 aa). 8 stretches are compositionally biased toward polar residues: residues 258 to 294, 322 to 334, 342 to 354, 362 to 373, 382 to 393, 402 to 414, 422 to 434, and 442 to 464; these read LPQQ…SLTG, RRSS…QQRG, RRSSTVEQTRQR, RRSSTVEQTQRR, and RRSS…SLPE. Positions 465–477 are enriched in basic and acidic residues; sequence QESHRGSITEGSH. Positions 501–513 are enriched in low complexity; the sequence is DDSGSAGSRRGSG. A compositionally biased stretch (acidic residues) spans 564-577; sequence QELDEDSTPQLEDD. Composition is skewed to basic and acidic residues over residues 578–598 and 638–655; these read SALK…EEKP and SKRD…PQHV. Residues 773 to 808 enclose the EF-hand domain; it reads RRRILLQAIFEKWDNDGSGFLDLNEVDDLLYTYKEG. Ca(2+)-binding residues include aspartate 786, aspartate 788, serine 790, and glutamate 797.

In Mus musculus (Mouse), this protein is EF-hand calcium-binding domain-containing protein 5 (Efcab5).